The following is a 271-amino-acid chain: Energy-coupling factor transporter ATP-binding protein EcfA (271 aa).

Residues Ile2–Thr231 form the ABC transporter domain. Gly34 to Ser41 is an ATP binding site.

The protein belongs to the ABC transporter superfamily. Energy-coupling factor EcfA family. Forms a stable energy-coupling factor (ECF) transporter complex composed of 2 membrane-embedded substrate-binding proteins (S component), 2 ATP-binding proteins (A component) and 2 transmembrane proteins (T component).

Its subcellular location is the cell membrane. ATP-binding (A) component of a common energy-coupling factor (ECF) ABC-transporter complex. Unlike classic ABC transporters this ECF transporter provides the energy necessary to transport a number of different substrates. This chain is Energy-coupling factor transporter ATP-binding protein EcfA, found in Aster yellows witches'-broom phytoplasma (strain AYWB).